Reading from the N-terminus, the 481-residue chain is ATP synthase subunit beta (481 aa).

154–161 (GGAGVGKT) is a binding site for ATP.

The protein belongs to the ATPase alpha/beta chains family. In terms of assembly, F-type ATPases have 2 components, CF(1) - the catalytic core - and CF(0) - the membrane proton channel. CF(1) has five subunits: alpha(3), beta(3), gamma(1), delta(1), epsilon(1). CF(0) has three main subunits: a(1), b(2) and c(9-12). The alpha and beta chains form an alternating ring which encloses part of the gamma chain. CF(1) is attached to CF(0) by a central stalk formed by the gamma and epsilon chains, while a peripheral stalk is formed by the delta and b chains.

Its subcellular location is the cell inner membrane. The catalysed reaction is ATP + H2O + 4 H(+)(in) = ADP + phosphate + 5 H(+)(out). Produces ATP from ADP in the presence of a proton gradient across the membrane. The catalytic sites are hosted primarily by the beta subunits. The sequence is that of ATP synthase subunit beta from Novosphingobium aromaticivorans (strain ATCC 700278 / DSM 12444 / CCUG 56034 / CIP 105152 / NBRC 16084 / F199).